The primary structure comprises 223 residues: Serine/threonine/tyrosine-interacting protein B (223 aa).

A Tyrosine-protein phosphatase domain is found at 28–176 (EMQEILPGLF…LQEYEAIYLA (149 aa)).

This sequence belongs to the protein-tyrosine phosphatase family. Non-receptor class subfamily.

In terms of biological role, catalytically inactive phosphatase. The protein is Serine/threonine/tyrosine-interacting protein B (styx-b) of Xenopus laevis (African clawed frog).